The sequence spans 490 residues: Serine hydroxymethyltransferase, mitochondrial (490 aa).

The transit peptide at 1 to 20 directs the protein to the mitochondrion; that stretch reads MFPRASALAKCMATVHRRGL. Position 265 is an N6-(pyridoxal phosphate)lysine (lysine 265).

Belongs to the SHMT family. Homotetramer. Interacts with NAP1. Requires pyridoxal 5'-phosphate as cofactor.

It localises to the mitochondrion. It catalyses the reaction (6R)-5,10-methylene-5,6,7,8-tetrahydrofolate + glycine + H2O = (6S)-5,6,7,8-tetrahydrofolate + L-serine. It functions in the pathway one-carbon metabolism; tetrahydrofolate interconversion. Interconversion of serine and glycine. The protein is Serine hydroxymethyltransferase, mitochondrial (SHM1) of Saccharomyces cerevisiae (strain ATCC 204508 / S288c) (Baker's yeast).